The sequence spans 1325 residues: RIMS-binding protein 2 (1325 aa).

The disordered stretch occupies residues 153–181; it reads TFLSKSRSDTPRCRFDSDMDNDQNSNTSK. Residues 158 to 169 are compositionally biased toward basic and acidic residues; sequence SRSDTPRCRFDS. In terms of domain architecture, SH3 1 spans 186–253; that stretch reads GKVHLCIARY…PSNFVDFVQD (68 aa). 3 Fibronectin type-III domains span residues 315-408, 411-493, and 507-608; these read VPYP…GKDV, APSN…KKEA, and PPQD…VPPS. 3 disordered regions span residues 601–778, 988–1010, and 1040–1090; these read SDLL…GSDL, DLGSSFVEPRSEQVKSSYEKKYE, and AAGP…SRPM. Over residues 627-641 the composition is skewed to basic and acidic residues; sequence ETKEEHLGPHLKIDE. Positions 664–676 are enriched in polar residues; that stretch reads FPSSLQGRRSPSP. Basic and acidic residues predominate over residues 696-716; the sequence is MAREAAQRVAESNRMERRSVF. Residues 717 to 727 are compositionally biased toward polar residues; the sequence is SERSNAAQYAN. Composition is skewed to basic and acidic residues over residues 763–774 and 996–1010; these read CHGEDYHTESSR and PRSEQVKSSYEKKYE. SH3 domains follow at residues 1121–1189 and 1225–1292; these read ISTR…EIQA and VSTR…EVPD.

It belongs to the RIMBP family. In terms of assembly, interacts with RIMS1, RIMS2, CACNA1D and CACNA1B, and potentially with other Ca(2+) channel alpha-1 isoforms. In terms of tissue distribution, brain, cochlea and retina.

It localises to the cell membrane. The protein resides in the synapse. In terms of biological role, plays a role in the synaptic transmission as bifunctional linker that interacts simultaneously with RIMS1, RIMS2, CACNA1D and CACNA1B. This is RIMS-binding protein 2 (RIMBP2) from Gallus gallus (Chicken).